We begin with the raw amino-acid sequence, 403 residues long: Dynactin subunit 2-B (403 aa).

The disordered stretch occupies residues methionine 1 to proline 26. The stretch at proline 99–lysine 132 forms a coiled coil. Positions alanine 183–leucine 206 are disordered. Basic and acidic residues predominate over residues alanine 184–serine 194. A coiled-coil region spans residues lysine 381–leucine 401.

Belongs to the dynactin subunit 2 family. As to quaternary structure, subunit of dynactin, a multiprotein complex part of a tripartite complex with dynein and a adapter, such as BICDL1, BICD2 or HOOK3. The dynactin complex is built around ACTR1A/ACTB filament and consists of an actin-related filament composed of a shoulder domain, a pointed end and a barbed end. Its length is defined by its flexible shoulder domain. The soulder is composed of 2 DCTN1 subunits, 4 DCTN2 and 2 DCTN3.

Its subcellular location is the cytoplasm. The protein resides in the cytoskeleton. It localises to the microtubule organizing center. The protein localises to the centrosome. It is found in the membrane. Functionally, part of the dynactin complex that activates the molecular motor dynein for ultra-processive transport along microtubules. In the dynactin soulder domain, binds the ACTR1A filament and acts as a molecular ruler to determine the length. Modulates cytoplasmic dynein binding to an organelle, and plays a role in prometaphase chromosome alignment and spindle organization during mitosis. Involved in anchoring microtubules to centrosomes. This is Dynactin subunit 2-B (dctn2-b) from Xenopus laevis (African clawed frog).